A 412-amino-acid polypeptide reads, in one-letter code: Serine hydroxymethyltransferase (412 aa).

(6S)-5,6,7,8-tetrahydrofolate is bound by residues leucine 117 and glycine 121 to leucine 123. Lysine 226 is modified (N6-(pyridoxal phosphate)lysine). (6S)-5,6,7,8-tetrahydrofolate is bound by residues glutamate 242 and serine 350–phenylalanine 352.

The protein belongs to the SHMT family. In terms of assembly, homodimer. Requires pyridoxal 5'-phosphate as cofactor.

It is found in the cytoplasm. It carries out the reaction (6R)-5,10-methylene-5,6,7,8-tetrahydrofolate + glycine + H2O = (6S)-5,6,7,8-tetrahydrofolate + L-serine. It functions in the pathway one-carbon metabolism; tetrahydrofolate interconversion. The protein operates within amino-acid biosynthesis; glycine biosynthesis; glycine from L-serine: step 1/1. Catalyzes the reversible interconversion of serine and glycine with tetrahydrofolate (THF) serving as the one-carbon carrier. Also exhibits THF-independent aldolase activity toward beta-hydroxyamino acids, producing glycine and aldehydes, via a retro-aldol mechanism. The protein is Serine hydroxymethyltransferase of Methanosarcina mazei (strain ATCC BAA-159 / DSM 3647 / Goe1 / Go1 / JCM 11833 / OCM 88) (Methanosarcina frisia).